Here is a 349-residue protein sequence, read N- to C-terminus: Phenylalanine--tRNA ligase alpha subunit (349 aa).

Residue Glu-259 participates in Mg(2+) binding.

This sequence belongs to the class-II aminoacyl-tRNA synthetase family. Phe-tRNA synthetase alpha subunit type 1 subfamily. As to quaternary structure, tetramer of two alpha and two beta subunits. Mg(2+) is required as a cofactor.

It localises to the cytoplasm. The enzyme catalyses tRNA(Phe) + L-phenylalanine + ATP = L-phenylalanyl-tRNA(Phe) + AMP + diphosphate + H(+). The protein is Phenylalanine--tRNA ligase alpha subunit of Lactobacillus acidophilus (strain ATCC 700396 / NCK56 / N2 / NCFM).